Here is a 466-residue protein sequence, read N- to C-terminus: Adenosylhomocysteinase (466 aa).

Residues T57, D132, and E192 each coordinate substrate. Position 193-195 (193-195) interacts with NAD(+); it reads TTT. The substrate site is built by K222 and D226. Residues N227, 256 to 261, E279, N314, 335 to 337, and N380 contribute to the NAD(+) site; these read GYGDVG and IGH.

It belongs to the adenosylhomocysteinase family. It depends on NAD(+) as a cofactor.

It localises to the cytoplasm. The catalysed reaction is S-adenosyl-L-homocysteine + H2O = L-homocysteine + adenosine. It participates in amino-acid biosynthesis; L-homocysteine biosynthesis; L-homocysteine from S-adenosyl-L-homocysteine: step 1/1. In terms of biological role, may play a key role in the regulation of the intracellular concentration of adenosylhomocysteine. In Rhizobium etli (strain CIAT 652), this protein is Adenosylhomocysteinase.